Consider the following 288-residue polypeptide: Nucleotide-binding protein ASA_0318 (288 aa).

8-15 (GRSGSGKT) is an ATP binding site. 56–59 (DVRN) is a GTP binding site.

The protein belongs to the RapZ-like family.

Displays ATPase and GTPase activities. This chain is Nucleotide-binding protein ASA_0318, found in Aeromonas salmonicida (strain A449).